A 437-amino-acid chain; its full sequence is D-aminoacyl-tRNA deacylase (437 aa).

It belongs to the DtdA deacylase family. Monomer. Zn(2+) is required as a cofactor.

It catalyses the reaction a D-aminoacyl-tRNA + H2O = a tRNA + a D-alpha-amino acid + H(+). The catalysed reaction is glycyl-tRNA(Ala) + H2O = tRNA(Ala) + glycine + H(+). Functionally, D-aminoacyl-tRNA deacylase with broad substrate specificity. By recycling D-aminoacyl-tRNA to D-amino acids and free tRNA molecules, this enzyme counteracts the toxicity associated with the formation of D-aminoacyl-tRNA entities in vivo. This is D-aminoacyl-tRNA deacylase from Methanoculleus marisnigri (strain ATCC 35101 / DSM 1498 / JR1).